Reading from the N-terminus, the 722-residue chain is Dynein axonemal intermediate chain 7 (722 aa).

Positions 1–15 are enriched in basic residues; the sequence is MGPKAKKSGSKKKKV. Positions 1–20 are disordered; sequence MGPKAKKSGSKKKKVTKAER.

Belongs to the DNAI7 family. As to quaternary structure, part of the multisubunit axonemal dynein complex formed at least of two heavy chains and a number of intermediate and light chains. Associates with tubulin. Interacts with microtubule. Post-translationally, ubiquitinated. Ubiquitination leads to its degradation through the 26S proteasome. Ubiquitin-proteasome-mediated DNAI7 degradation occurs in mitosis.

The protein localises to the cell projection. It is found in the cilium. It localises to the cytoplasm. In terms of biological role, via its association with the multisubunit axonemal dynein complex, is potentially involved in the regulation of cilia function. May act as a cell cycle regulator. This is Dynein axonemal intermediate chain 7 from Macaca fascicularis (Crab-eating macaque).